The chain runs to 380 residues: Tryptophan--tRNA ligase (380 aa).

A 'HIGH' region motif is present at residues 81–89 (PSLGMHIGH). The short motif at 253 to 257 (KMSSS) is the 'KMSKS' region element.

The protein belongs to the class-I aminoacyl-tRNA synthetase family.

The protein resides in the cytoplasm. It carries out the reaction tRNA(Trp) + L-tryptophan + ATP = L-tryptophyl-tRNA(Trp) + AMP + diphosphate + H(+). This is Tryptophan--tRNA ligase from Saccharolobus solfataricus (strain ATCC 35092 / DSM 1617 / JCM 11322 / P2) (Sulfolobus solfataricus).